The chain runs to 147 residues: Histone H2B (147 aa).

The span at 1–31 (MAPKAEKKPAEKKPAEEKKAVAEKAPAEKKP) shows a compositional bias: basic and acidic residues. Positions 1 to 55 (MAPKAEKKPAEKKPAEEKKAVAEKAPAEKKPKAGKKLPKEGGAAAGDKKKKRVKK) are disordered. N6-acetyllysine occurs at positions 7, 35, and 36. Residue lysine 143 forms a Glycyl lysine isopeptide (Lys-Gly) (interchain with G-Cter in ubiquitin) linkage.

It belongs to the histone H2B family. The nucleosome is a histone octamer containing two molecules each of H2A, H2B, H3 and H4 assembled in one H3-H4 heterotetramer and two H2A-H2B heterodimers. The octamer wraps approximately 147 bp of DNA. In terms of processing, can be acetylated to form H2BK6ac, H2BK33ac and H2BK34ac. Post-translationally, monoubiquitinated to form H2BK143ub1; may give a specific tag for epigenetic transcriptional activation.

The protein resides in the nucleus. Its subcellular location is the chromosome. Functionally, core component of nucleosome. Nucleosomes wrap and compact DNA into chromatin, limiting DNA accessibility to the cellular machineries which require DNA as a template. Histones thereby play a central role in transcription regulation, DNA repair, DNA replication and chromosomal stability. DNA accessibility is regulated via a complex set of post-translational modifications of histones, also called histone code, and nucleosome remodeling. The polypeptide is Histone H2B (HIS2B) (Gossypium hirsutum (Upland cotton)).